A 949-amino-acid chain; its full sequence is Translation initiation factor IF-2 (949 aa).

Disordered stretches follow at residues 61–122 (IQAN…PIIK), 139–159 (VENTPKAVSHSQIEKAKQKLQ), and 171–284 (LTQS…NKSH). Composition is skewed to basic and acidic residues over residues 112-122 (KKKEAPAPIIK) and 150-159 (QIEKAKQKLQ). The span at 174 to 190 (SNTNTTNNANSASNVSN) shows a compositional bias: low complexity. Over residues 191–208 (AKKEISEVKKQEQEIKRH) the composition is skewed to basic and acidic residues. The segment covering 209–220 (ENIKRRTGFRVI) has biased composition (basic residues). Residues 249–264 (EDIKKEWQEKDKQETK) are compositionally biased toward basic and acidic residues. Residues 448-617 (ERPPVVTIMG…LIQADIMELK (170 aa)) form the tr-type G domain. The tract at residues 457–464 (GHVDHGKT) is G1. 457–464 (GHVDHGKT) provides a ligand contact to GTP. Positions 482 to 486 (GITQH) are G2. The G3 stretch occupies residues 503–506 (DTPG). GTP-binding positions include 503–507 (DTPGH) and 557–560 (NKMD). Positions 557-560 (NKMD) are G4. The segment at 593–595 (SAK) is G5.

This sequence belongs to the TRAFAC class translation factor GTPase superfamily. Classic translation factor GTPase family. IF-2 subfamily.

Its subcellular location is the cytoplasm. One of the essential components for the initiation of protein synthesis. Protects formylmethionyl-tRNA from spontaneous hydrolysis and promotes its binding to the 30S ribosomal subunits. Also involved in the hydrolysis of GTP during the formation of the 70S ribosomal complex. The chain is Translation initiation factor IF-2 (infB) from Helicobacter pylori (strain J99 / ATCC 700824) (Campylobacter pylori J99).